A 238-amino-acid polypeptide reads, in one-letter code: N-methyltransferase vrtF (238 aa).

The protein belongs to the methyltransferase superfamily.

It functions in the pathway secondary metabolite biosynthesis; terpenoid biosynthesis. In terms of biological role, N-methyltransferase; part of the gene cluster that mediates the biosynthesis of viridicatumtoxin, a tetracycline-like fungal meroterpenoid with a unique, fused spirobicyclic ring system. The first step of the pathway is the production of the malonamoyl-CoA starter unit for the polyketide synthase vrtA. The aldolase vrtJ may be involved in the synthesis of the malonamate substrate for malonamoyl-CoA synthetase vrtB. The polyketide synthase vrtA then may utilize the malonamoyl-CoA starter unit, followed by sequential condensation of eight malonyl-CoA units to form the polyketide backbone. The cyclization of the last ring could be mediated by the lactamase-like protein vrtG. The proposed post-PKS tailoring steps are a hydroxylation at C5 catalyzed the cytochrome P450 monooxygenase vrtE, a hydroxylation at C12a catalyzed by VrtH and/or VrtI, and an O-methylation by the O-methyltransferase vrtF. VrtC is then proposed to catalyze the transfer of a geranyl group synthesized by vrtD to the aromatic C ring of the tetracyclic polyketide intermediate of viridicatumtoxin to yield previridicatumtoxin. Finally, the cytochrome P450 monooxygenase vrtK catalyzes the spirocyclization of the geranyl moiety of previridicatumtoxin to afford viridicatumtoxin. This chain is N-methyltransferase vrtF, found in Penicillium aethiopicum.